Reading from the N-terminus, the 435-residue chain is MKIPVTADAESASKDGLQHDDIRATATVRDRIKQFSAEASIPLEKASFSRQAPSQNPSITAKPPIPPQRAALKPGTKLVKATGTELCGNQQHGRSRNISPIAHFPAVPLSNKNTSAILSSDSETGAELADRREFTASKAVRHGSRDPHAEMSSWKSPTPLPQRKKEAPPVPPRSSQLSTESELLQLDPPSLHTDQEGSGVNHTLEVRESDISDSALADAMTASYLIPSHAALGSKRGLKQPPPPPPPRQRGSPSQPLLQLSSDSSKVNPPALGPDEILKRGMDMLDEPKSGSELPPKPPRRVTFNPNPEVFQIESGNVVQGQVISSERKRYEEVWEANRGVARFGVMHDPNVDQKVIRKSLAYEDLVVDLVVRDIWSRSRLPQAELAKIWKLVSHDAVGMLSREEFVVGMWLIDQCLKGHGLPTNVPKSVWKSVQ.

Disordered stretches follow at residues 1–20 (MKIP…LQHD), 39–71 (ASIP…QRAA), 136–204 (ASKA…NHTL), and 233–277 (GSKR…PDEI). The segment covering 11–20 (SASKDGLQHD) has biased composition (basic and acidic residues). Positions 48–59 (FSRQAPSQNPSI) are enriched in polar residues. 2 stretches are compositionally biased toward low complexity: residues 174–186 (SSQL…LLQL) and 249–265 (QRGS…SDSS). In terms of domain architecture, EH spans 327 to 435 (ERKRYEEVWE…VPKSVWKSVQ (109 aa)).

Belongs to the IRS4 family.

Its function is as follows. Positive regulator of phosphatidylinositol 4,5-bisphosphate turnover and negatively regulates signaling through the cell integrity pathway. Involved in rDNA silencing. The polypeptide is Increased rDNA silencing protein 4 (IRS4) (Coccidioides immitis (strain RS) (Valley fever fungus)).